We begin with the raw amino-acid sequence, 291 residues long: Small ribosomal subunit protein uS2 (291 aa).

This sequence belongs to the universal ribosomal protein uS2 family.

This Orientia tsutsugamushi (strain Boryong) (Rickettsia tsutsugamushi) protein is Small ribosomal subunit protein uS2.